A 293-amino-acid chain; its full sequence is Elongation factor Ts (293 aa).

An involved in Mg(2+) ion dislocation from EF-Tu region spans residues 80 to 83; it reads TDFV.

This sequence belongs to the EF-Ts family.

The protein localises to the cytoplasm. Associates with the EF-Tu.GDP complex and induces the exchange of GDP to GTP. It remains bound to the aminoacyl-tRNA.EF-Tu.GTP complex up to the GTP hydrolysis stage on the ribosome. The polypeptide is Elongation factor Ts (Herminiimonas arsenicoxydans).